Reading from the N-terminus, the 878-residue chain is Alanine--tRNA ligase (878 aa).

Zn(2+) is bound by residues histidine 567, histidine 571, cysteine 669, and histidine 673.

It belongs to the class-II aminoacyl-tRNA synthetase family. It depends on Zn(2+) as a cofactor.

It is found in the cytoplasm. It catalyses the reaction tRNA(Ala) + L-alanine + ATP = L-alanyl-tRNA(Ala) + AMP + diphosphate. Functionally, catalyzes the attachment of alanine to tRNA(Ala) in a two-step reaction: alanine is first activated by ATP to form Ala-AMP and then transferred to the acceptor end of tRNA(Ala). Also edits incorrectly charged Ser-tRNA(Ala) and Gly-tRNA(Ala) via its editing domain. In Rickettsia felis (strain ATCC VR-1525 / URRWXCal2) (Rickettsia azadi), this protein is Alanine--tRNA ligase.